A 600-amino-acid polypeptide reads, in one-letter code: Methylenetetrahydrofolate reductase 2 (600 aa).

E22 functions as the Proton donor/acceptor in the catalytic mechanism. NAD(+) is bound by residues 22-27 (EYFVPK) and 54-55 (TW). FAD contacts are provided by residues 54-55 (TW), H84, 114-116 (RGD), 133-134 (YA), Y156, D171, and K178. D116 is a substrate binding site. Residues Q189 and Y282 each coordinate substrate.

Belongs to the methylenetetrahydrofolate reductase family. FAD serves as cofactor.

It catalyses the reaction (6S)-5-methyl-5,6,7,8-tetrahydrofolate + NADP(+) = (6R)-5,10-methylene-5,6,7,8-tetrahydrofolate + NADPH + H(+). The protein operates within one-carbon metabolism; tetrahydrofolate interconversion. The protein is Methylenetetrahydrofolate reductase 2 (MET13) of Saccharomyces cerevisiae (strain ATCC 204508 / S288c) (Baker's yeast).